A 274-amino-acid polypeptide reads, in one-letter code: Caldesmon, smooth muscle (274 aa).

Disordered regions lie at residues Ser-1–Lys-102 and Lys-179–Pro-274. Composition is skewed to basic and acidic residues over residues Gly-12 to Gln-21 and Asp-28 to Pro-95. Residues Val-182–Lys-194 are compositionally biased toward polar residues. Basic and acidic residues-rich tracts occupy residues Ser-226–Val-245 and Lys-260–Pro-274.

The protein localises to the cytoplasm. The protein resides in the cytoskeleton. Its subcellular location is the myofibril. It is found in the stress fiber. Control of actomyosin interactions in smooth muscle and nonmuscle cells (could act as a bridge between myosin and actin filaments). Inhibits the actin-activated ATPase of myosin this inhibition is attenuated by calcium-calmodulin and is potentiated by tropomyosin. Interacts with actin, myosin, 2 molecules of tropomyosin and with calmodulin. The polypeptide is Caldesmon, smooth muscle (CALD1) (Meleagris gallopavo (Wild turkey)).